The following is a 237-amino-acid chain: Demethylmenaquinone methyltransferase (237 aa).

Residues threonine 58, aspartate 79, and 106-107 each bind S-adenosyl-L-methionine; that span reads NA.

The protein belongs to the class I-like SAM-binding methyltransferase superfamily. MenG/UbiE family.

The enzyme catalyses a 2-demethylmenaquinol + S-adenosyl-L-methionine = a menaquinol + S-adenosyl-L-homocysteine + H(+). The protein operates within quinol/quinone metabolism; menaquinone biosynthesis; menaquinol from 1,4-dihydroxy-2-naphthoate: step 2/2. Methyltransferase required for the conversion of demethylmenaquinol (DMKH2) to menaquinol (MKH2). The polypeptide is Demethylmenaquinone methyltransferase (Bacillus anthracis (strain A0248)).